The following is a 271-amino-acid chain: 2-dehydro-3-deoxyphosphooctonate aldolase (271 aa).

This sequence belongs to the KdsA family.

It localises to the cytoplasm. It catalyses the reaction D-arabinose 5-phosphate + phosphoenolpyruvate + H2O = 3-deoxy-alpha-D-manno-2-octulosonate-8-phosphate + phosphate. Its pathway is carbohydrate biosynthesis; 3-deoxy-D-manno-octulosonate biosynthesis; 3-deoxy-D-manno-octulosonate from D-ribulose 5-phosphate: step 2/3. It participates in bacterial outer membrane biogenesis; lipopolysaccharide biosynthesis. The polypeptide is 2-dehydro-3-deoxyphosphooctonate aldolase (Campylobacter jejuni subsp. jejuni serotype O:2 (strain ATCC 700819 / NCTC 11168)).